The primary structure comprises 117 residues: MKVLVICAVLFLTIFSNSSAETEDDFLEDESFEADDVIPFLAREQVRSDCTLRNHDCTDDRHSCCRSKMFKDVCKCFYPSQRSDTARAKKELCTCQQDKHLKFIEKGLQKAKVLVAG.

A signal peptide spans 1–20; the sequence is MKVLVICAVLFLTIFSNSSA. The propeptide occupies 21 to 47; that stretch reads ETEDDFLEDESFEADDVIPFLAREQVR. 4 disulfide bridges follow: Cys-50–Cys-65, Cys-57–Cys-74, Cys-64–Cys-95, and Cys-76–Cys-93. Positions 82-87 are excised as a propeptide; sequence RSDTAR. The residue at position 116 (Ala-116) is an Alanine amide.

This sequence belongs to the neurotoxin 19 (CSTX) family. 12 subfamily. Heterodimer of A and B chains; disulfide-linked. Interacts with CSTX-1 (AC P81694), and with CSTX-9 (AC P58604). As to expression, expressed by the venom gland.

The protein resides in the secreted. The protein localises to the target cell membrane. Its function is as follows. Synergistic toxin that induces or increases a cytolytic effect when combined with CSTX-1 (AC P81694) or CSTX-9 (AC P58604). When alone, has a weak insecticidal activity, with an unknown molecular target. This is Toxin CSTX-12 from Cupiennius salei (American wandering spider).